Consider the following 1100-residue polypeptide: DNA-directed RNA polymerase subunit beta (1100 aa).

The disordered stretch occupies residues 1064–1100; the sequence is YEEDKEVDLMADVNQRRTPSRPTYESMSVGDIDDDDD. The span at 1079–1089 shows a compositional bias: polar residues; sequence RRTPSRPTYES.

Belongs to the RNA polymerase beta chain family. As to quaternary structure, in cyanobacteria the RNAP catalytic core is composed of 2 alpha, 1 beta, 1 beta', 1 gamma and 1 omega subunit. When a sigma factor is associated with the core the holoenzyme is formed, which can initiate transcription.

The enzyme catalyses RNA(n) + a ribonucleoside 5'-triphosphate = RNA(n+1) + diphosphate. In terms of biological role, DNA-dependent RNA polymerase catalyzes the transcription of DNA into RNA using the four ribonucleoside triphosphates as substrates. The sequence is that of DNA-directed RNA polymerase subunit beta from Synechococcus sp. (strain ATCC 27144 / PCC 6301 / SAUG 1402/1) (Anacystis nidulans).